A 375-amino-acid polypeptide reads, in one-letter code: Citrate synthase (375 aa).

Catalysis depends on residues His266 and Asp317.

Belongs to the citrate synthase family. In terms of assembly, homohexamer.

It catalyses the reaction oxaloacetate + acetyl-CoA + H2O = citrate + CoA + H(+). Its pathway is carbohydrate metabolism; tricarboxylic acid cycle; isocitrate from oxaloacetate: step 1/2. Its activity is regulated as follows. Allosterically inhibited by NADH. The chain is Citrate synthase (gltA) from Mycolicibacterium smegmatis (Mycobacterium smegmatis).